Here is a 119-residue protein sequence, read N- to C-terminus: Large ribosomal subunit protein bL20c (119 aa).

Belongs to the bacterial ribosomal protein bL20 family.

The protein localises to the plastid. The protein resides in the chloroplast. In terms of biological role, binds directly to 23S ribosomal RNA and is necessary for the in vitro assembly process of the 50S ribosomal subunit. It is not involved in the protein synthesizing functions of that subunit. This Amborella trichopoda protein is Large ribosomal subunit protein bL20c.